The following is a 444-amino-acid chain: Glutamyl-tRNA reductase (444 aa).

Residues 49-52 (TCNR), Ser-109, 114-116 (ETQ), and Gln-120 each bind substrate. The Nucleophile role is filled by Cys-50. Residue 189 to 194 (GAGKMG) participates in NADP(+) binding.

The protein belongs to the glutamyl-tRNA reductase family. In terms of assembly, homodimer.

The enzyme catalyses (S)-4-amino-5-oxopentanoate + tRNA(Glu) + NADP(+) = L-glutamyl-tRNA(Glu) + NADPH + H(+). The protein operates within porphyrin-containing compound metabolism; protoporphyrin-IX biosynthesis; 5-aminolevulinate from L-glutamyl-tRNA(Glu): step 1/2. Catalyzes the NADPH-dependent reduction of glutamyl-tRNA(Glu) to glutamate 1-semialdehyde (GSA). This Bacillus cereus (strain 03BB102) protein is Glutamyl-tRNA reductase.